The following is an 840-amino-acid chain: Cullin-4 (840 aa).

Residues 1 to 11 (MTSGAPPTIST) are compositionally biased toward polar residues. The interval 1-82 (MTSGAPPTIS…TGNSSRTTAT (82 aa)) is disordered. Basic and acidic residues predominate over residues 33-48 (TEAKQMRGDTENRSDG). Over residues 69–82 (FRSQTGNSSRTTAT) the composition is skewed to polar residues. A Cullin neddylation domain is found at 772 to 831 (DRQYKIDAAVVRIMKARKQLNHQTLMTELLQQLRFPVSTADIKKRLESLIEREYISRDPE). A Glycyl lysine isopeptide (Lys-Gly) (interchain with G-Cter in NEDD8) cross-link involves residue K786.

Belongs to the cullin family. Part of an E3 ubiquitin-protein ligase complex including cul-4 and ddb-1. In terms of processing, neddylated. Deneddylated via its interaction with the COP9 signalosome (CSN) complex.

The protein operates within protein modification; protein ubiquitination. In terms of biological role, component of cullin-based E3 ubiquitin-protein ligase complexes which mediate the ubiquitination and subsequent proteasomal degradation of target proteins. The functional specificity of the E3 ubiquitin-protein ligase complex depends on the variable substrate recognition component. In association with ddb-1 directs ubiquitination of cdt-1 during S phase and is required for restraining DNA rereplication. Probably is involved in ubiquitination of cki-1. This is Cullin-4 (cul-4) from Caenorhabditis elegans.